We begin with the raw amino-acid sequence, 956 residues long: Replication factor C subunit 1 (956 aa).

Basic and acidic residues-rich tracts occupy residues 1-15 (MSDIRKWFMKAHEKG) and 50-74 (TADRRKTSKYFGKDKTKVKDEKEVE). Disordered stretches follow at residues 1–206 (MSDI…TPDC) and 286–332 (KKSL…AKGK). Positions 158–183 (RGRGGRAAPGASTGGRGRGGGRGGFM) are enriched in gly residues. Basic and acidic residues-rich tracts occupy residues 186 to 200 (GERKDPPHKGEKEVP) and 288 to 298 (SLPERSNKGTE). Residues 202–292 (GTPDCLAGLT…KPVKKSLPER (91 aa)) form the BRCT domain. ATP is bound at residue 399 to 406 (SGTPGIGK). The segment at 858–956 (LEPTVDSLRD…GRGSGAKRKR (99 aa)) is disordered. The span at 866 to 892 (RDEDGEPLADNEEGNGSDAEEDSEEAT) shows a compositional bias: acidic residues. Positions 916–925 (KGAGSSGSRK) are enriched in low complexity.

It belongs to the activator 1 large subunit family. In terms of assembly, heterotetramer of subunits RFC2, RFC3, RFC4 and RFC5 that can form a complex with RFC1. In terms of tissue distribution, expressed at high levels in flowers and siliques, and at lower levels in roots, stems and leaves.

The protein resides in the nucleus. Plays a role as mediator of transcriptional gene silencing (TGS), DNA replication, DNA repair, hypersensitive response (HR) and telomere length regulation. Is required in meiosis for DNA double-strand break (DSB) repair during meiotic homologous recombination. May participate in the RAD51-mediated recombination intermediate repair process. Is important for lagging strand synthesis. Promotes meiotic recombination via a specific pathway for crossovers (COs) that involves the formation of double Holliday Junction (dHJ) intermediates. This Arabidopsis thaliana (Mouse-ear cress) protein is Replication factor C subunit 1 (RFC1).